The primary structure comprises 264 residues: GTP cyclohydrolase FolE2 (264 aa).

This sequence belongs to the GTP cyclohydrolase IV family.

The enzyme catalyses GTP + H2O = 7,8-dihydroneopterin 3'-triphosphate + formate + H(+). It functions in the pathway cofactor biosynthesis; 7,8-dihydroneopterin triphosphate biosynthesis; 7,8-dihydroneopterin triphosphate from GTP: step 1/1. Converts GTP to 7,8-dihydroneopterin triphosphate. The chain is GTP cyclohydrolase FolE2 from Vesicomyosocius okutanii subsp. Calyptogena okutanii (strain HA).